The following is an 862-amino-acid chain: Valine--tRNA ligase (862 aa).

The 'HIGH' region signature appears at 43–53 (PNVTGSLHMGH). 8 residues coordinate Zn(2+): C176, C179, C344, C347, C417, C420, C438, and C441. A 'KMSKS' region motif is present at residues 528 to 532 (KMSKS). K531 contacts ATP. Positions 802–862 (RRRQEKRLKE…RIREALSQIG (61 aa)) form a coiled coil.

It belongs to the class-I aminoacyl-tRNA synthetase family. ValS type 1 subfamily. As to quaternary structure, monomer. It depends on Zn(2+) as a cofactor.

Its subcellular location is the cytoplasm. The catalysed reaction is tRNA(Val) + L-valine + ATP = L-valyl-tRNA(Val) + AMP + diphosphate. Functionally, catalyzes the attachment of valine to tRNA(Val). As ValRS can inadvertently accommodate and process structurally similar amino acids such as threonine, to avoid such errors, it has a 'posttransfer' editing activity that hydrolyzes mischarged Thr-tRNA(Val) in a tRNA-dependent manner. The protein is Valine--tRNA ligase of Thermus thermophilus (strain ATCC BAA-163 / DSM 7039 / HB27).